The following is a 97-amino-acid chain: Large ribosomal subunit protein uL23 (97 aa).

The protein belongs to the universal ribosomal protein uL23 family. As to quaternary structure, part of the 50S ribosomal subunit. Contacts protein L29, and trigger factor when it is bound to the ribosome.

In terms of biological role, one of the early assembly proteins it binds 23S rRNA. One of the proteins that surrounds the polypeptide exit tunnel on the outside of the ribosome. Forms the main docking site for trigger factor binding to the ribosome. In Lactiplantibacillus plantarum (strain ATCC BAA-793 / NCIMB 8826 / WCFS1) (Lactobacillus plantarum), this protein is Large ribosomal subunit protein uL23.